The chain runs to 407 residues: Phosphopentomutase (407 aa).

Mn(2+) contacts are provided by Asp-10, Asp-306, His-311, Asp-347, His-348, and His-359.

The protein belongs to the phosphopentomutase family. The cofactor is Mn(2+).

The protein resides in the cytoplasm. The enzyme catalyses 2-deoxy-alpha-D-ribose 1-phosphate = 2-deoxy-D-ribose 5-phosphate. The catalysed reaction is alpha-D-ribose 1-phosphate = D-ribose 5-phosphate. It participates in carbohydrate degradation; 2-deoxy-D-ribose 1-phosphate degradation; D-glyceraldehyde 3-phosphate and acetaldehyde from 2-deoxy-alpha-D-ribose 1-phosphate: step 1/2. In terms of biological role, isomerase that catalyzes the conversion of deoxy-ribose 1-phosphate (dRib-1-P) and ribose 1-phosphate (Rib-1-P) to deoxy-ribose 5-phosphate (dRib-5-P) and ribose 5-phosphate (Rib-5-P), respectively. The chain is Phosphopentomutase from Photorhabdus laumondii subsp. laumondii (strain DSM 15139 / CIP 105565 / TT01) (Photorhabdus luminescens subsp. laumondii).